A 335-amino-acid polypeptide reads, in one-letter code: tRNA N6-adenosine threonylcarbamoyltransferase (335 aa).

Residues H111 and H115 each coordinate Fe cation. Residues 133–137 (LISGG), D166, G179, and N276 each bind substrate. Residue D301 participates in Fe cation binding.

The protein belongs to the KAE1 / TsaD family. Fe(2+) is required as a cofactor.

Its subcellular location is the cytoplasm. It catalyses the reaction L-threonylcarbamoyladenylate + adenosine(37) in tRNA = N(6)-L-threonylcarbamoyladenosine(37) in tRNA + AMP + H(+). Its function is as follows. Required for the formation of a threonylcarbamoyl group on adenosine at position 37 (t(6)A37) in tRNAs that read codons beginning with adenine. Is involved in the transfer of the threonylcarbamoyl moiety of threonylcarbamoyl-AMP (TC-AMP) to the N6 group of A37, together with TsaE and TsaB. TsaD likely plays a direct catalytic role in this reaction. The protein is tRNA N6-adenosine threonylcarbamoyltransferase of Wolbachia sp. subsp. Brugia malayi (strain TRS).